The chain runs to 381 residues: GDP-mannose-dependent monoacylated alpha-(1-6)-phosphatidylinositol monomannoside mannosyltransferase (381 aa).

Residues Arg206, Lys211, Leu261, and Glu298 each contribute to the GDP-alpha-D-mannose site.

This sequence belongs to the glycosyltransferase group 1 family. Glycosyltransferase 4 subfamily.

The catalysed reaction is a 1,2-diacyl-sn-glycero-3-phospho-[alpha-D-mannopyranosyl-(1&lt;-&gt;6)-D-myo-inositol] + GDP-alpha-D-mannose = a 2,6-O-bis(alpha-D-mannopyranosyl)-1-phosphatidyl-1D-myo-inositol + GDP + H(+). The enzyme catalyses a 1,2-diacyl-sn-glycero-3-phospho-[alpha-D-6-acyl-mannopyranosyl-(1&lt;-&gt;6)-D-myo-inositol] + GDP-alpha-D-mannose = a 2-O-(alpha-D-mannosyl)-6-O-(6-O-acyl-alpha-D-mannosyl)-1-phosphatidyl-1D-myo-inositol + GDP + H(+). It functions in the pathway phospholipid metabolism; phosphatidylinositol metabolism. Functionally, involved in the biosynthesis of phosphatidyl-myo-inositol mannosides (PIM) which are early precursors in the biosynthesis of lipomannans (LM) and lipoarabinomannans (LAM). Catalyzes the addition of a mannosyl residue from GDP-D-mannose (GDP-Man) to the position 6 of a phosphatidyl-myo-inositol bearing an alpha-1,2-linked mannose residue (PIM1) to generate phosphatidyl-myo-inositol bearing alpha-1,2- and alpha-1,6-linked mannose residues (Ac1PIM2). PimB also catalyzes the addition of a mannosyl residue from GDP-Man to the position 6 of phosphatidyl-myo-inositol bearing an acylated alpha-1,2-linked mannose residue (Ac1PIM1) to generate monoacylated phosphatidyl-myo-inositol bearing alpha-1,2- and alpha-1,6-linked mannose residues (Ac1PIM2). The addition of the second mannosyl residue by PimB preferentially occurs before the acylation of the mannosyl residue transferred by PimA. Also able to transfer a mannosyl residue from GDP-Man to the position 6 of a phosphatidyl-myo-inositol (PI), but this reaction is very slow. The polypeptide is GDP-mannose-dependent monoacylated alpha-(1-6)-phosphatidylinositol monomannoside mannosyltransferase (Corynebacterium glutamicum (strain ATCC 13032 / DSM 20300 / JCM 1318 / BCRC 11384 / CCUG 27702 / LMG 3730 / NBRC 12168 / NCIMB 10025 / NRRL B-2784 / 534)).